The following is a 229-amino-acid chain: Protein-lysine N-methyltransferase EFM4 (229 aa).

The protein belongs to the class I-like SAM-binding methyltransferase superfamily. EFM4 family.

The protein resides in the cytoplasm. It carries out the reaction L-lysyl-[protein] + S-adenosyl-L-methionine = N(6)-methyl-L-lysyl-[protein] + S-adenosyl-L-homocysteine + H(+). The enzyme catalyses N(6)-methyl-L-lysyl-[protein] + S-adenosyl-L-methionine = N(6),N(6)-dimethyl-L-lysyl-[protein] + S-adenosyl-L-homocysteine + H(+). S-adenosyl-L-methionine-dependent protein-lysine N-methyltransferase that mono- and dimethylates elongation factor 1-alpha (TEF1 and TEF2) at 'Lys-316'. May play a role in intracellular transport. The chain is Protein-lysine N-methyltransferase EFM4 from Saccharomyces cerevisiae (strain ATCC 204508 / S288c) (Baker's yeast).